Consider the following 377-residue polypeptide: MEATGLITEYNPFHNGHLYHLKKAQELTKADVTIVLMSGNWVQRGLPAITDKWKRAQAAIDAGADLVFELPFYYAVQAGEIFAQGAVRLLSDLQVSSIICGSEHADIDFINLAAHEPDISGNSNFDKKNRTFASNYAAALEEKTGFYLENANDILAFSYAKAILNQNLTEKIKLRTISRVSADYHDQFLNDGEIASATAIRKALSEGQNVDSYTPMSDLQYTDYEARLFQLLKYRLSTDGLGQIRSIYQVNEGMEYLIKQAIEKNPSDFGELLALIKSKRYTFARLHRVLVYILLNIKVDQMNLAMQNPYHRLLGFTEKGRQYLHEKKGRFNFPTISHVDQKTANKSLAIDYKAGLVYNQIMDYKSTQDIKRTPIQS.

ATP is bound by residues 7-20, G101, N152, and R179; that span reads ITEY…HLYH.

It belongs to the TmcAL family.

It is found in the cytoplasm. It catalyses the reaction cytidine(34) in elongator tRNA(Met) + acetate + ATP = N(4)-acetylcytidine(34) in elongator tRNA(Met) + AMP + diphosphate. Its function is as follows. Catalyzes the formation of N(4)-acetylcytidine (ac(4)C) at the wobble position of elongator tRNA(Met), using acetate and ATP as substrates. First activates an acetate ion to form acetyladenylate (Ac-AMP) and then transfers the acetyl group to tRNA to form ac(4)C34. The sequence is that of tRNA(Met) cytidine acetate ligase from Oenococcus oeni (strain ATCC BAA-331 / PSU-1).